The primary structure comprises 99 residues: uncharacterized protein (99 aa).

A helical membrane pass occupies residues 74 to 90 (FLSLPLGHSYLFLFCFW).

It localises to the membrane. This is an uncharacterized protein from Saccharomyces cerevisiae (strain ATCC 204508 / S288c) (Baker's yeast).